The chain runs to 678 residues: ABC transporter G family member 13 (678 aa).

Residues 10 to 254 (VAWEDLTVVI…FGEAGFPCPS (245 aa)) form the ABC transporter domain. 48 to 55 (GPSGSGKS) provides a ligand contact to ATP. In terms of domain architecture, ABC transmembrane type-2 spans 355–567 (KQLRILTQRS…ALQGAYKNEM (213 aa)). A run of 6 helical transmembrane segments spans residues 374 to 394 (YYWM…SIFF), 409 to 429 (CGGF…QSFI), 446 to 466 (VAVY…LMCL), 490 to 510 (LDLI…ASVV), 513 to 533 (FLMG…SAGF), and 602 to 622 (LDLA…FAIL). Phosphoserine is present on Ser658.

The protein belongs to the ABC transporter superfamily. ABCG family. Eye pigment precursor importer (TC 3.A.1.204) subfamily.

It is found in the membrane. The protein is ABC transporter G family member 13 (ABCG13) of Arabidopsis thaliana (Mouse-ear cress).